A 164-amino-acid chain; its full sequence is CB1 cannabinoid receptor-interacting protein 1 (164 aa).

It belongs to the CNRIP family. Interacts with the cannabinoid receptor CNR1 (via C-terminus). Does not interact with cannabinoid receptor CNR2.

Suppresses cannabinoid receptor CNR1-mediated tonic inhibition of voltage-gated calcium channels. In terms of biological role, does not suppress cannabinoid receptor CNR1-mediated tonic inhibition of voltage-gated calcium channels. This Homo sapiens (Human) protein is CB1 cannabinoid receptor-interacting protein 1 (CNRIP1).